A 227-amino-acid chain; its full sequence is Probable methylthioribulose-1-phosphate dehydratase (227 aa).

C87 contacts substrate. The Zn(2+) site is built by H105 and H107. The Proton donor/acceptor role is filled by E129. H185 is a Zn(2+) binding site.

This sequence belongs to the aldolase class II family. MtnB subfamily. The cofactor is Zn(2+).

The protein localises to the cytoplasm. The catalysed reaction is 5-(methylsulfanyl)-D-ribulose 1-phosphate = 5-methylsulfanyl-2,3-dioxopentyl phosphate + H2O. It functions in the pathway amino-acid biosynthesis; L-methionine biosynthesis via salvage pathway; L-methionine from S-methyl-5-thio-alpha-D-ribose 1-phosphate: step 2/6. Its function is as follows. Catalyzes the dehydration of methylthioribulose-1-phosphate (MTRu-1-P) into 2,3-diketo-5-methylthiopentyl-1-phosphate (DK-MTP-1-P). This is Probable methylthioribulose-1-phosphate dehydratase from Drosophila mojavensis (Fruit fly).